The following is an 874-amino-acid chain: Alanine--tRNA ligase (874 aa).

Zn(2+) is bound by residues H562, H566, C663, and H667.

This sequence belongs to the class-II aminoacyl-tRNA synthetase family. Zn(2+) is required as a cofactor.

It is found in the cytoplasm. It catalyses the reaction tRNA(Ala) + L-alanine + ATP = L-alanyl-tRNA(Ala) + AMP + diphosphate. Its function is as follows. Catalyzes the attachment of alanine to tRNA(Ala) in a two-step reaction: alanine is first activated by ATP to form Ala-AMP and then transferred to the acceptor end of tRNA(Ala). Also edits incorrectly charged Ser-tRNA(Ala) and Gly-tRNA(Ala) via its editing domain. In Bordetella pertussis (strain Tohama I / ATCC BAA-589 / NCTC 13251), this protein is Alanine--tRNA ligase.